We begin with the raw amino-acid sequence, 505 residues long: Lysine--tRNA ligase (505 aa).

Mg(2+) contacts are provided by glutamate 415 and glutamate 422.

Belongs to the class-II aminoacyl-tRNA synthetase family. Homodimer. Mg(2+) serves as cofactor.

Its subcellular location is the cytoplasm. It catalyses the reaction tRNA(Lys) + L-lysine + ATP = L-lysyl-tRNA(Lys) + AMP + diphosphate. The polypeptide is Lysine--tRNA ligase (Shigella dysenteriae serotype 1 (strain Sd197)).